A 117-amino-acid polypeptide reads, in one-letter code: Large ribosomal subunit protein uL18 (117 aa).

The protein belongs to the universal ribosomal protein uL18 family. As to quaternary structure, part of the 50S ribosomal subunit; part of the 5S rRNA/L5/L18/L25 subcomplex. Contacts the 5S and 23S rRNAs.

Its function is as follows. This is one of the proteins that bind and probably mediate the attachment of the 5S RNA into the large ribosomal subunit, where it forms part of the central protuberance. This Serratia proteamaculans (strain 568) protein is Large ribosomal subunit protein uL18.